Here is a 1574-residue protein sequence, read N- to C-terminus: Synaptojanin-1 (1574 aa).

Residues 119-442 (VRKVLNSGNF…GDSISKIYAG (324 aa)) form the SAC domain. 2 positions are modified to phosphoserine: S820 and S830. The RRM domain occupies 894–971 (GTVLVSIKSS…RTITITLKSP (78 aa)). Residues 1029–1054 (HLQPSSSSGLGTSPSSSPRTSPCQSP) show a composition bias toward low complexity. The segment at 1029–1327 (HLQPSSSSGL…GVKQEPTLKS (299 aa)) is disordered. S1053 is subject to Phosphoserine. A compositionally biased stretch (polar residues) spans 1080 to 1100 (SSQGSPVDTQPAAQKDSSQTL). The span at 1105 to 1127 (PPPPRPVAPPARPAPPQRPPPPS) shows a compositional bias: pro residues. Residues S1147 and S1175 each carry the phosphoserine modification. The residue at position 1198 (R1198) is an Omega-N-methylarginine. Residue T1217 is modified to Phosphothreonine. Over residues 1268 to 1287 (TMPPSGPQPNLETPPQPPPR) the composition is skewed to pro residues. Low complexity predominate over residues 1288–1307 (SRSSQSLPSDSSPQLQQEQP). Phosphoserine is present on residues S1290 and S1350. A Phosphothreonine modification is found at T1354. 2 disordered regions span residues 1363–1507 (LPSA…SVCP) and 1532–1574 (LPAR…FTER). Polar residues-rich tracts occupy residues 1364–1379 (PSAS…SVSC), 1393–1402 (QESMGSSANP), 1424–1436 (RVQS…TSWL), and 1472–1484 (DLQS…TSNP). The segment at 1403-1425 (FPSLPCRNPFTDRTAAPGNPFRV) is 3 X 3 AA repeats of N-P-F. Pro residues predominate over residues 1535 to 1548 (RRPPPPPPPVPLLP). The segment covering 1549 to 1563 (PGTTSSAGPSTTLPS) has biased composition (low complexity). Polar residues predominate over residues 1565–1574 (APSTLDFTER).

The protein belongs to the synaptojanin family. This sequence in the central section; belongs to the inositol 1,4,5-trisphosphate 5-phosphatase family. Interacts with ASH/GRB2. Interacts with PACSIN1, PACSIN2 and PACSIN3. Interacts with AMPH, SH3GL1, SH3GL2 and SH3GL3. Interacts with MYO1E (via SH3 domain). Interacts with BIN1 and DNM1. Interacts with EPS15.

The protein localises to the cytoplasm. It is found in the perinuclear region. It catalyses the reaction a 1,2-diacyl-sn-glycero-3-phospho-(1D-myo-inositol-4,5-bisphosphate) + H2O = a 1,2-diacyl-sn-glycero-3-phospho-(1D-myo-inositol 4-phosphate) + phosphate. Phosphatase that acts on various phosphoinositides, including phosphatidylinositol 4-phosphate, phosphatidylinositol (4,5)-bisphosphate and phosphatidylinositol (3,4,5)-trisphosphate. Has a role in clathrin-mediated endocytosis. Hydrolyzes PIP2 bound to actin regulatory proteins resulting in the rearrangement of actin filaments downstream of tyrosine kinase and ASH/GRB2. This Mus musculus (Mouse) protein is Synaptojanin-1 (Synj1).